The sequence spans 381 residues: Erythronate-4-phosphate dehydrogenase (381 aa).

The substrate site is built by Ser-45 and Thr-67. NAD(+) contacts are provided by residues 127-128, Asp-147, and Thr-176; that span reads QV. The active site involves Arg-209. Asp-233 provides a ligand contact to NAD(+). The active site involves Glu-238. His-255 functions as the Proton donor in the catalytic mechanism. An NAD(+)-binding site is contributed by Gly-258. Residue Tyr-259 participates in substrate binding.

Belongs to the D-isomer specific 2-hydroxyacid dehydrogenase family. PdxB subfamily. In terms of assembly, homodimer.

It is found in the cytoplasm. The catalysed reaction is 4-phospho-D-erythronate + NAD(+) = (R)-3-hydroxy-2-oxo-4-phosphooxybutanoate + NADH + H(+). Its pathway is cofactor biosynthesis; pyridoxine 5'-phosphate biosynthesis; pyridoxine 5'-phosphate from D-erythrose 4-phosphate: step 2/5. Catalyzes the oxidation of erythronate-4-phosphate to 3-hydroxy-2-oxo-4-phosphonooxybutanoate. This Vibrio cholerae serotype O1 (strain ATCC 39315 / El Tor Inaba N16961) protein is Erythronate-4-phosphate dehydrogenase.